We begin with the raw amino-acid sequence, 515 residues long: 1-pyrroline-5-carboxylate dehydrogenase 2 (515 aa).

Catalysis depends on residues Glu286 and Cys320.

The protein belongs to the aldehyde dehydrogenase family. RocA subfamily.

It carries out the reaction L-glutamate 5-semialdehyde + NAD(+) + H2O = L-glutamate + NADH + 2 H(+). The protein operates within amino-acid degradation; L-proline degradation into L-glutamate; L-glutamate from L-proline: step 2/2. The protein is 1-pyrroline-5-carboxylate dehydrogenase 2 (rocA2) of Halalkalibacterium halodurans (strain ATCC BAA-125 / DSM 18197 / FERM 7344 / JCM 9153 / C-125) (Bacillus halodurans).